We begin with the raw amino-acid sequence, 329 residues long: MSNNRLVILHGNAHPKLSKEIASCLNTEVGNALVSKFANSETQVIINESVRDVDLYIVQPTCNPSVNDYLMELLVMVDGAKRASAHRITAVVPFFGYARQSKKDKSRAPITCKLVANMMEAAGIDRVITMDLHSSQIQGFFNIPVENVYTEPLFVKYIKKKKKTEFLNQEFVIVSPGVGGVKRAKAISDKLESELAIIHRANKEMSLSLSSSFSFDIEETVLVGDVTGKIAIIIDDIADTCKTLKLASKALIKKGAIKVYALVTHGVFSNNAIDIINDSSITELVITDSIPNEHNKEKCPKLKIISIASVLSETMRRCHHGESVTSISK.

Mg(2+) is bound by residues D131, H133, and E146. The binding of phosphoribosylpyrophosphate stretch occupies residues 227–242; it reads TGKIAIIIDDIADTCK.

This sequence belongs to the ribose-phosphate pyrophosphokinase family. Requires Mg(2+) as cofactor.

The protein resides in the cytoplasm. It carries out the reaction D-ribose 5-phosphate + ATP = 5-phospho-alpha-D-ribose 1-diphosphate + AMP + H(+). It participates in metabolic intermediate biosynthesis; 5-phospho-alpha-D-ribose 1-diphosphate biosynthesis; 5-phospho-alpha-D-ribose 1-diphosphate from D-ribose 5-phosphate (route I): step 1/1. In Dictyostelium discoideum (Social amoeba), this protein is Ribose-phosphate pyrophosphokinase B (prsB).